A 98-amino-acid chain; its full sequence is MALIYTNTLLAFTISLLGLLLYRSHLMSSLLCLEGMMLSMFVMVAVMILNTHLTTSSMMPIVLLVFAACEAALGLSLLVMVSNTYGIDHVQNLNLLQC.

The next 3 membrane-spanning stretches (helical) occupy residues 1–21 (MALI…GLLL), 29–49 (SLLC…VMIL), and 61–81 (IVLL…LVMV).

Belongs to the complex I subunit 4L family. As to quaternary structure, core subunit of respiratory chain NADH dehydrogenase (Complex I) which is composed of 45 different subunits.

The protein resides in the mitochondrion inner membrane. The enzyme catalyses a ubiquinone + NADH + 5 H(+)(in) = a ubiquinol + NAD(+) + 4 H(+)(out). Functionally, core subunit of the mitochondrial membrane respiratory chain NADH dehydrogenase (Complex I) which catalyzes electron transfer from NADH through the respiratory chain, using ubiquinone as an electron acceptor. Part of the enzyme membrane arm which is embedded in the lipid bilayer and involved in proton translocation. The chain is NADH-ubiquinone oxidoreductase chain 4L (MT-ND4L) from Rhinolophus monoceros (Formosan lesser horseshoe bat).